Here is a 515-residue protein sequence, read N- to C-terminus: Iridoid oxidase (515 aa).

2 helical membrane passes run 8–28 (SLNP…IIFV) and 180–200 (AVQL…NLML). Cys-455 is a binding site for heme.

Belongs to the cytochrome P450 family. In terms of tissue distribution, expressed in the leaf internal phloem-associated parenchyma (IPAP) inside the mesophyll.

Its subcellular location is the endoplasmic reticulum membrane. The enzyme catalyses (+)-cis-trans-nepetalactol + 3 reduced [NADPH--hemoprotein reductase] + 3 O2 = 7-deoxyloganetate + 3 oxidized [NADPH--hemoprotein reductase] + 4 H2O + 4 H(+). Its pathway is alkaloid biosynthesis. Component of the seco-iridoid and derivatives monoterpenoid indole alkaloids (MIAs, e.g. vincristine, quinine, and strychnine) biosynthesis pathway. Catalyzes the conversion of cis-trans-nepetalactol (iridodial) into 7-deoxyloganetic acid. Also converts iridotrial into 7-deoxyloganetic acid. This is Iridoid oxidase from Catharanthus roseus (Madagascar periwinkle).